The sequence spans 24 residues: Aldehyde dehydrogenase gamma chain (24 aa).

As to quaternary structure, heterotrimer composed of an alpha, a beta and a gamma chain. [2Fe-2S] cluster is required as a cofactor.

The catalysed reaction is an aldehyde + a quinone + H2O = a quinol + a carboxylate + H(+). This Comamonas testosteroni (Pseudomonas testosteroni) protein is Aldehyde dehydrogenase gamma chain.